The primary structure comprises 707 residues: Protein kinase C theta type (707 aa).

A C2 domain is found at 1-107 (MSPFLRIGLS…KNNGRTEIWL (107 aa)). The residue at position 90 (Tyr-90) is a Phosphotyrosine; by LCK. Residues 159–209 (CHEFTATFFPQPTFCSVCHEFVWGLNKQGYQCRRCNAAIHKKCIDKVIAKC) form a Phorbol-ester/DAG-type 1 zinc finger. Position 219 is a phosphothreonine; by autocatalysis (Thr-219). The Phorbol-ester/DAG-type 2 zinc-finger motif lies at 231–281 (PHRFKVYNYKSPTFCEHCGTLLWGLARQGLKCDACGMNVHHRCQTKVANLC). Ser-348 carries the phosphoserine modification. Residues 380–634 (FILHKMLGKG…RGDIRQHPLF (255 aa)) enclose the Protein kinase domain. Residues 386 to 394 (LGKGSFGKV) and Lys-409 each bind ATP. Asp-504 (proton acceptor) is an active-site residue. Position 538 is a phosphothreonine; by PDPK1 (Thr-538). The region spanning 635–706 (REINWEELER…INPGMETLIC (72 aa)) is the AGC-kinase C-terminal domain. Ser-676 and Ser-685 each carry phosphoserine. At Ser-695 the chain carries Phosphoserine; by autocatalysis.

Belongs to the protein kinase superfamily. AGC Ser/Thr protein kinase family. PKC subfamily. In terms of assembly, part of a membrane raft complex composed at least of BCL10, CARD11, MALT1 and IKBKB. Interacts with GLRX3 (via N-terminus). Interacts with ECT2. Interacts with CCDC88A/GIV; the interaction leads to phosphorylation of CCDC88A and inhibition of its guanine nucleotide exchange factor activity. Interacts with CD28. Mg(2+) is required as a cofactor. Autophosphorylation at Thr-219 is required for targeting to the TCR and cellular function of PRKCQ upon antigen receptor ligation. Following TCR stimulation, phosphorylated at Tyr-90 and Ser-685.

The protein localises to the cytoplasm. Its subcellular location is the cell membrane. The enzyme catalyses L-seryl-[protein] + ATP = O-phospho-L-seryl-[protein] + ADP + H(+). The catalysed reaction is L-threonyl-[protein] + ATP = O-phospho-L-threonyl-[protein] + ADP + H(+). Its activity is regulated as follows. Novel PKCs (PRKCD, PRKCE, PRKCH and PRKCQ) are calcium-insensitive, but activated by diacylglycerol (DAG) and phosphatidylserine. Three specific sites; Thr-538 (activation loop of the kinase domain), Ser-676 (turn motif) and Ser-695 (hydrophobic region), need to be phosphorylated for its full activation. Its function is as follows. Calcium-independent, phospholipid- and diacylglycerol (DAG)-dependent serine/threonine-protein kinase that mediates non-redundant functions in T-cell receptor (TCR) signaling, including T-cells activation, proliferation, differentiation and survival, by mediating activation of multiple transcription factors such as NF-kappa-B, JUN, NFATC1 and NFATC2. In TCR-CD3/CD28-co-stimulated T-cells, is required for the activation of NF-kappa-B and JUN, which in turn are essential for IL2 production, and participates in the calcium-dependent NFATC1 and NFATC2 transactivation. Mediates the activation of the canonical NF-kappa-B pathway (NFKB1) by direct phosphorylation of CARD11 on several serine residues, inducing CARD11 association with lipid rafts and recruitment of the BCL10-MALT1 complex, which then activates IKK complex, resulting in nuclear translocation and activation of NFKB1. May also play an indirect role in activation of the non-canonical NF-kappa-B (NFKB2) pathway. In the signaling pathway leading to JUN activation, acts by phosphorylating the mediator STK39/SPAK and may not act through MAP kinases signaling. Plays a critical role in TCR/CD28-induced NFATC1 and NFATC2 transactivation by participating in the regulation of reduced inositol 1,4,5-trisphosphate generation and intracellular calcium mobilization. After costimulation of T-cells through CD28 can phosphorylate CBLB and is required for the ubiquitination and subsequent degradation of CBLB, which is a prerequisite for the activation of TCR. During T-cells differentiation, plays an important role in the development of T-helper 2 (Th2) cells following immune and inflammatory responses, and, in the development of inflammatory autoimmune diseases, is necessary for the activation of IL17-producing Th17 cells. May play a minor role in Th1 response. Upon TCR stimulation, mediates T-cell protective survival signal by phosphorylating BAD, thus protecting T-cells from BAD-induced apoptosis, and by up-regulating BCL-X(L)/BCL2L1 levels through NF-kappa-B and JUN pathways. In platelets, regulates signal transduction downstream of the ITGA2B, CD36/GP4, F2R/PAR1 and F2RL3/PAR4 receptors, playing a positive role in 'outside-in' signaling and granule secretion signal transduction. May relay signals from the activated ITGA2B receptor by regulating the uncoupling of WASP and WIPF1, thereby permitting the regulation of actin filament nucleation and branching activity of the Arp2/3 complex. May mediate inhibitory effects of free fatty acids on insulin signaling by phosphorylating IRS1, which in turn blocks IRS1 tyrosine phosphorylation and downstream activation of the PI3K/AKT pathway. Phosphorylates MSN (moesin) in the presence of phosphatidylglycerol or phosphatidylinositol. Phosphorylates PDPK1 at 'Ser-504' and 'Ser-532' and negatively regulates its ability to phosphorylate PKB/AKT1. Phosphorylates CCDC88A/GIV and inhibits its guanine nucleotide exchange factor activity. Phosphorylates and activates LRRK1, which phosphorylates RAB proteins involved in intracellular trafficking. This chain is Protein kinase C theta type (Prkcq), found in Rattus norvegicus (Rat).